A 130-amino-acid chain; its full sequence is Large ribosomal subunit protein bL19c (130 aa).

Belongs to the bacterial ribosomal protein bL19 family.

The protein localises to the plastid. It is found in the chloroplast. The polypeptide is Large ribosomal subunit protein bL19c (rpl19) (Chlorella vulgaris (Green alga)).